The sequence spans 372 residues: Cytochrome b (372 aa).

4 helical membrane passes run 25 to 45 (FGSM…FLSM), 69 to 90 (WMMQ…YIHV), 105 to 125 (WLSG…GYVL), and 170 to 190 (FFAL…LHIM). Residues H75 and H89 each coordinate heme b. The heme b site is built by H174 and H188. H193 provides a ligand contact to a ubiquinone. A run of 4 helical transmembrane segments spans residues 218–238 (YKDL…ISFI), 280–300 (LGGA…PFTH), 312–332 (FMQL…WTAT), and 339–358 (YTMI…MSNP).

It belongs to the cytochrome b family. The cytochrome bc1 complex contains 3 respiratory subunits (MT-CYB, CYC1 and UQCRFS1), 2 core proteins (UQCRC1 and UQCRC2) and probably 6 low-molecular weight proteins. Heme b is required as a cofactor.

The protein localises to the mitochondrion inner membrane. Functionally, component of the ubiquinol-cytochrome c reductase complex (complex III or cytochrome b-c1 complex) that is part of the mitochondrial respiratory chain. The b-c1 complex mediates electron transfer from ubiquinol to cytochrome c. Contributes to the generation of a proton gradient across the mitochondrial membrane that is then used for ATP synthesis. The protein is Cytochrome b (MT-CYB) of Acrantophis madagascariensis (Madagascar ground boa).